Here is a 349-residue protein sequence, read N- to C-terminus: Isopentenyl-diphosphate delta-isomerase (349 aa).

Substrate is bound at residue 9-10 (RK). Residues 65-67 (AMT), serine 95, and asparagine 124 contribute to the FMN site. Residue 95-97 (STH) participates in substrate binding. Substrate is bound at residue glutamine 154. Position 155 (glutamate 155) interacts with Mg(2+). FMN contacts are provided by residues lysine 186, serine 211, threonine 216, 262-264 (GLR), and 283-284 (SR).

It belongs to the IPP isomerase type 2 family. As to quaternary structure, homooctamer. Dimer of tetramers. Requires FMN as cofactor. NADPH serves as cofactor. The cofactor is Mg(2+).

The protein resides in the cytoplasm. The enzyme catalyses isopentenyl diphosphate = dimethylallyl diphosphate. Involved in the biosynthesis of isoprenoids. Catalyzes the 1,3-allylic rearrangement of the homoallylic substrate isopentenyl (IPP) to its allylic isomer, dimethylallyl diphosphate (DMAPP). This is Isopentenyl-diphosphate delta-isomerase from Staphylococcus aureus (strain N315).